The primary structure comprises 563 residues: CTP synthase (563 aa).

Residues 1-278 (MAKATAKNSA…DLRVLEQLHL (278 aa)) form an amidoligase domain region. Serine 24 contacts CTP. Serine 24 provides a ligand contact to UTP. 25–30 (SLGKGI) lines the ATP pocket. Tyrosine 65 serves as a coordination point for L-glutamine. Aspartate 82 contacts ATP. Mg(2+) contacts are provided by aspartate 82 and glutamate 151. CTP contacts are provided by residues 158–160 (DIE), 198–203 (KTKPSQ), and lysine 234. Residues 198 to 203 (KTKPSQ) and lysine 234 each bind UTP. Position 250–252 (250–252 (KDV)) interacts with ATP. The Glutamine amidotransferase type-1 domain occupies 303–545 (TIALVGKYIA…VKAALEQKKA (243 aa)). L-glutamine is bound at residue glycine 363. Cysteine 390 (nucleophile; for glutamine hydrolysis) is an active-site residue. L-glutamine-binding positions include 391 to 394 (LGMQ), glutamate 414, and arginine 471. Catalysis depends on residues histidine 518 and glutamate 520. Residues 542–563 (QKKANGKKPTAPSEKTKKTKTK) are disordered.

This sequence belongs to the CTP synthase family. In terms of assembly, homotetramer.

The catalysed reaction is UTP + L-glutamine + ATP + H2O = CTP + L-glutamate + ADP + phosphate + 2 H(+). It catalyses the reaction L-glutamine + H2O = L-glutamate + NH4(+). It carries out the reaction UTP + NH4(+) + ATP = CTP + ADP + phosphate + 2 H(+). It functions in the pathway pyrimidine metabolism; CTP biosynthesis via de novo pathway; CTP from UDP: step 2/2. Allosterically activated by GTP, when glutamine is the substrate; GTP has no effect on the reaction when ammonia is the substrate. The allosteric effector GTP functions by stabilizing the protein conformation that binds the tetrahedral intermediate(s) formed during glutamine hydrolysis. Inhibited by the product CTP, via allosteric rather than competitive inhibition. Its function is as follows. Catalyzes the ATP-dependent amination of UTP to CTP with either L-glutamine or ammonia as the source of nitrogen. Regulates intracellular CTP levels through interactions with the four ribonucleotide triphosphates. The polypeptide is CTP synthase (Fibrobacter succinogenes (strain ATCC 19169 / S85)).